The chain runs to 172 residues: Probable calcium-binding protein CML28 (172 aa).

4 EF-hand domains span residues Met-1–Phe-36, Ile-37–Asp-72, Asp-95–Lys-130, and Arg-133–Ala-168. Ca(2+) is bound by residues Asp-14, Asn-16, Asp-18, Arg-20, Glu-25, Asp-50, Asn-52, Asp-54, Cys-56, Glu-61, Asp-108, Asn-110, Asp-112, Glu-119, Asp-146, Asp-148, Asp-150, Arg-152, and Glu-157.

Functionally, potential calcium sensor. The protein is Probable calcium-binding protein CML28 (CML28) of Oryza sativa subsp. japonica (Rice).